A 478-amino-acid chain; its full sequence is Putative multidrug resistance outer membrane protein MdtQ (478 aa).

Positions 1–21 are cleaved as a signal peptide; it reads MNRDSFYPAIACFPLLLMLAG. Cysteine 22 carries N-palmitoyl cysteine lipidation. The S-diacylglycerol cysteine moiety is linked to residue cysteine 22.

Belongs to the outer membrane factor (OMF) (TC 1.B.17) family.

Its subcellular location is the cell outer membrane. Could be involved in resistance to puromycin, acriflavine and tetraphenylarsonium chloride. This Escherichia coli (strain K12) protein is Putative multidrug resistance outer membrane protein MdtQ (mdtQ).